The primary structure comprises 506 residues: Trans-cinnamate 4-monooxygenase C4H1 (506 aa).

Short sequence motifs (nuclear localization signal) lie at residues 161 to 168 (VKKMPESA) and 247 to 254 (QRRLQLFK). Cysteine 448 is a binding site for heme.

It belongs to the cytochrome P450 family. Heme serves as cofactor.

The protein localises to the nucleus. The enzyme catalyses (E)-cinnamate + reduced [NADPH--hemoprotein reductase] + O2 = (E)-4-coumarate + oxidized [NADPH--hemoprotein reductase] + H2O + H(+). The protein operates within phenylpropanoid metabolism; trans-4-coumarate biosynthesis; trans-4-coumarate from trans-cinnamate: step 1/1. Functionally, component of the floral volatile benzenoid/phenylpropanoid (FVBP) biosynthetic pathway that controls carbon flux to pigments essential for pollination or UV protection, to numerous pytoalexins synthesized by plants when challenged by pathogens, and to lignins. In Petunia hybrida (Petunia), this protein is Trans-cinnamate 4-monooxygenase C4H1.